A 277-amino-acid polypeptide reads, in one-letter code: Phosphatidylglycerol--prolipoprotein diacylglyceryl transferase (277 aa).

A run of 4 helical transmembrane segments spans residues 18–38, 54–74, 91–111, and 115–135; these read IAIY…YFMA, DLLV…YVIF, EGGI…IVFA, and GLSF…GQAI. R137 contributes to the a 1,2-diacyl-sn-glycero-3-phospho-(1'-sn-glycerol) binding site. A run of 3 helical transmembrane segments spans residues 177 to 197, 205 to 225, and 236 to 256; these read QPTF…LLLL, GELF…IEGM, and LRTA…LWVY.

Belongs to the Lgt family.

It localises to the cell membrane. It carries out the reaction L-cysteinyl-[prolipoprotein] + a 1,2-diacyl-sn-glycero-3-phospho-(1'-sn-glycerol) = an S-1,2-diacyl-sn-glyceryl-L-cysteinyl-[prolipoprotein] + sn-glycerol 1-phosphate + H(+). It functions in the pathway protein modification; lipoprotein biosynthesis (diacylglyceryl transfer). In terms of biological role, catalyzes the transfer of the diacylglyceryl group from phosphatidylglycerol to the sulfhydryl group of the N-terminal cysteine of a prolipoprotein, the first step in the formation of mature lipoproteins. The sequence is that of Phosphatidylglycerol--prolipoprotein diacylglyceryl transferase from Shouchella clausii (strain KSM-K16) (Alkalihalobacillus clausii).